Consider the following 103-residue polypeptide: Small ribosomal subunit protein uS10 (103 aa).

It belongs to the universal ribosomal protein uS10 family. As to quaternary structure, part of the 30S ribosomal subunit.

Involved in the binding of tRNA to the ribosomes. In Hydrogenovibrio crunogenus (strain DSM 25203 / XCL-2) (Thiomicrospira crunogena), this protein is Small ribosomal subunit protein uS10.